A 940-amino-acid polypeptide reads, in one-letter code: Isoleucine--tRNA ligase (940 aa).

Positions 58-68 (PYANGSIHIGH) match the 'HIGH' region motif. Glu-564 lines the L-isoleucyl-5'-AMP pocket. The 'KMSKS' region motif lies at 605–609 (KMSKS). Residue Lys-608 participates in ATP binding. Residues Cys-903, Cys-906, Cys-923, and Cys-926 each coordinate Zn(2+).

It belongs to the class-I aminoacyl-tRNA synthetase family. IleS type 1 subfamily. Monomer. The cofactor is Zn(2+).

It is found in the cytoplasm. It catalyses the reaction tRNA(Ile) + L-isoleucine + ATP = L-isoleucyl-tRNA(Ile) + AMP + diphosphate. Catalyzes the attachment of isoleucine to tRNA(Ile). As IleRS can inadvertently accommodate and process structurally similar amino acids such as valine, to avoid such errors it has two additional distinct tRNA(Ile)-dependent editing activities. One activity is designated as 'pretransfer' editing and involves the hydrolysis of activated Val-AMP. The other activity is designated 'posttransfer' editing and involves deacylation of mischarged Val-tRNA(Ile). The chain is Isoleucine--tRNA ligase from Shewanella sp. (strain MR-4).